Consider the following 204-residue polypeptide: Threonylcarbamoyl-AMP synthase (204 aa).

The YrdC-like domain maps to 10-204 (ADELDLVANY…KDLLAGHILR (195 aa)).

It belongs to the SUA5 family. TsaC subfamily.

The protein localises to the cytoplasm. The enzyme catalyses L-threonine + hydrogencarbonate + ATP = L-threonylcarbamoyladenylate + diphosphate + H2O. In terms of biological role, required for the formation of a threonylcarbamoyl group on adenosine at position 37 (t(6)A37) in tRNAs that read codons beginning with adenine. Catalyzes the conversion of L-threonine, HCO(3)(-)/CO(2) and ATP to give threonylcarbamoyl-AMP (TC-AMP) as the acyladenylate intermediate, with the release of diphosphate. This Moraxella catarrhalis (strain BBH18) protein is Threonylcarbamoyl-AMP synthase.